Here is a 612-residue protein sequence, read N- to C-terminus: Dihydroxy-acid dehydratase (612 aa).

D81 contributes to the Mg(2+) binding site. C122 contacts [2Fe-2S] cluster. 2 residues coordinate Mg(2+): D123 and K124. K124 carries the post-translational modification N6-carboxylysine. C195 provides a ligand contact to [2Fe-2S] cluster. E491 is a binding site for Mg(2+). S517 (proton acceptor) is an active-site residue.

Belongs to the IlvD/Edd family. As to quaternary structure, homodimer. It depends on [2Fe-2S] cluster as a cofactor. Mg(2+) serves as cofactor.

It carries out the reaction (2R)-2,3-dihydroxy-3-methylbutanoate = 3-methyl-2-oxobutanoate + H2O. The catalysed reaction is (2R,3R)-2,3-dihydroxy-3-methylpentanoate = (S)-3-methyl-2-oxopentanoate + H2O. It functions in the pathway amino-acid biosynthesis; L-isoleucine biosynthesis; L-isoleucine from 2-oxobutanoate: step 3/4. It participates in amino-acid biosynthesis; L-valine biosynthesis; L-valine from pyruvate: step 3/4. In terms of biological role, functions in the biosynthesis of branched-chain amino acids. Catalyzes the dehydration of (2R,3R)-2,3-dihydroxy-3-methylpentanoate (2,3-dihydroxy-3-methylvalerate) into 2-oxo-3-methylpentanoate (2-oxo-3-methylvalerate) and of (2R)-2,3-dihydroxy-3-methylbutanoate (2,3-dihydroxyisovalerate) into 2-oxo-3-methylbutanoate (2-oxoisovalerate), the penultimate precursor to L-isoleucine and L-valine, respectively. The protein is Dihydroxy-acid dehydratase of Rhizobium leguminosarum bv. trifolii (strain WSM2304).